Reading from the N-terminus, the 172-residue chain is UPF0114 protein PMI3225 (172 aa).

4 helical membrane-spanning segments follow: residues 15–35 (LFAP…IKFF), 57–77 (LLSL…IFSG), 108–128 (KVAA…FMDL), and 136–156 (LLWY…MGYL).

This sequence belongs to the UPF0114 family.

It is found in the cell membrane. The polypeptide is UPF0114 protein PMI3225 (Proteus mirabilis (strain HI4320)).